The chain runs to 95 residues: Small ribosomal subunit protein bS16 (95 aa).

Belongs to the bacterial ribosomal protein bS16 family.

In Mycoplasma genitalium (strain ATCC 33530 / DSM 19775 / NCTC 10195 / G37) (Mycoplasmoides genitalium), this protein is Small ribosomal subunit protein bS16.